A 349-amino-acid chain; its full sequence is MALAGAPVAARSPRAVQVWLYAVAALIVLMVVVGGATRLTESGLSITEWKPITGALPPLSEADWQAEFDRYKTIPQYEILNKGMGLEAFKTIYWWEWGHRLLGRVIGLAFFLPFLYFALTGALRGTLLARCFGLFLLGGLQGAVGWWMVASGLTEHTSVSQYRLAVHLTLACIILTAIVAVARSLSPLAAQALPARVRLTARVLVGLVLLQIFAGGLVAGLDAGMSFNTWPLMDGHLVPAAGQLGAMQPLWRNLFENAMTVQFVHRSIAYLIFALAFLHLLDCLRLGGTAARRATLVFALVAAQAMLGILTLVHMVPLDLALAHQLGATLVLIAAMIHASDSNRRQIVA.

The next 5 membrane-spanning stretches (helical) occupy residues 15–35, 101–121, 132–152, 162–182, and 203–223; these read AVQV…VVGG, LLGR…ALTG, FGLF…VASG, YRLA…VAVA, and VLVG…GLDA. Position 265 (His-265) interacts with heme. The next 3 membrane-spanning stretches (helical) occupy residues 268–288, 296–316, and 317–337; these read IAYL…RLGG, LVFA…VHMV, and PLDL…AAMI. His-324 lines the heme pocket.

This sequence belongs to the COX15/CtaA family. Type 2 subfamily. In terms of assembly, interacts with CtaB. It depends on heme b as a cofactor.

It is found in the cell membrane. It carries out the reaction Fe(II)-heme o + 2 A + H2O = Fe(II)-heme a + 2 AH2. It functions in the pathway porphyrin-containing compound metabolism; heme A biosynthesis; heme A from heme O: step 1/1. Functionally, catalyzes the conversion of heme O to heme A by two successive hydroxylations of the methyl group at C8. The first hydroxylation forms heme I, the second hydroxylation results in an unstable dihydroxymethyl group, which spontaneously dehydrates, resulting in the formyl group of heme A. This chain is Heme A synthase, found in Azorhizobium caulinodans (strain ATCC 43989 / DSM 5975 / JCM 20966 / LMG 6465 / NBRC 14845 / NCIMB 13405 / ORS 571).